The primary structure comprises 427 residues: Gamma-glutamyl phosphate reductase (427 aa).

This sequence belongs to the gamma-glutamyl phosphate reductase family.

The protein localises to the cytoplasm. The enzyme catalyses L-glutamate 5-semialdehyde + phosphate + NADP(+) = L-glutamyl 5-phosphate + NADPH + H(+). The protein operates within amino-acid biosynthesis; L-proline biosynthesis; L-glutamate 5-semialdehyde from L-glutamate: step 2/2. Its function is as follows. Catalyzes the NADPH-dependent reduction of L-glutamate 5-phosphate into L-glutamate 5-semialdehyde and phosphate. The product spontaneously undergoes cyclization to form 1-pyrroline-5-carboxylate. The sequence is that of Gamma-glutamyl phosphate reductase from Gluconobacter oxydans (strain 621H) (Gluconobacter suboxydans).